The chain runs to 765 residues: Protein transport protein Sec23A (765 aa).

T2 carries the post-translational modification N-acetylthreonine. Residues C61, C66, C85, and C88 each coordinate Zn(2+). T308 bears the Phosphothreonine mark. A Gelsolin-like repeat occupies 632 to 718 (PEPVLLDSSS…EHGGSQARFL (87 aa)).

Belongs to the SEC23/SEC24 family. SEC23 subfamily. COPII is composed of at least five proteins: the Sec23/24 complex, the Sec13/31 complex and Sar1. Interacts with SEC23IP. Interacts with HTR4. Interacts with SEC16A. Interacts with SLC6A4. Interacts (as part of the Sec23/24 complex) with SEC22B; recruits SEC22B into COPII-coated vesicles and allows the transport of this cargo from the endoplasmic reticulum to the Golgi. Interacts (via Gelsolin-like repeat) with MIA2 and MIA3; specifically involved in the transport of large cargos like the collagen COL7A1. Interacts with DDHD1. Interacts with TMEM39A. Interacts with SACM1L; this interaction is reduced in the absence of TMEM39A. Interacts with kinase FAM20C; transport of FAM20C from the endoplasmic reticulum to the Golgi is likely to be mediated by COPII vesicles. High levels in brain and fibroblasts.

Its subcellular location is the cytoplasmic vesicle. It is found in the COPII-coated vesicle membrane. The protein localises to the endoplasmic reticulum membrane. The protein resides in the cytoplasm. It localises to the cytosol. Component of the coat protein complex II (COPII) which promotes the formation of transport vesicles from the endoplasmic reticulum (ER). The coat has two main functions, the physical deformation of the endoplasmic reticulum membrane into vesicles and the selection of cargo molecules for their transport to the Golgi complex. Required for the translocation of insulin-induced glucose transporter SLC2A4/GLUT4 to the cell membrane. This Mus musculus (Mouse) protein is Protein transport protein Sec23A.